Reading from the N-terminus, the 255-residue chain is Aliphatic sulfonates import ATP-binding protein SsuB (255 aa).

The ABC transporter domain occupies 12 to 233 (LLLNAVSKHY…RLGSVRLAEL (222 aa)). 44–51 (GRSGGGKS) contributes to the ATP binding site.

The protein belongs to the ABC transporter superfamily. Aliphatic sulfonates importer (TC 3.A.1.17.2) family. In terms of assembly, the complex is composed of two ATP-binding proteins (SsuB), two transmembrane proteins (SsuC) and a solute-binding protein (SsuA).

Its subcellular location is the cell inner membrane. The catalysed reaction is ATP + H2O + aliphatic sulfonate-[sulfonate-binding protein]Side 1 = ADP + phosphate + aliphatic sulfonateSide 2 + [sulfonate-binding protein]Side 1.. Functionally, part of the ABC transporter complex SsuABC involved in aliphatic sulfonates import. Responsible for energy coupling to the transport system. The chain is Aliphatic sulfonates import ATP-binding protein SsuB from Shigella flexneri serotype 5b (strain 8401).